The chain runs to 619 residues: UPF0329 protein ECU08_2070 (619 aa).

2 stretches are compositionally biased toward basic and acidic residues: residues 350-359 and 369-385; these read EREKREESKG and GAGE…RKEE. The disordered stretch occupies residues 350 to 425; sequence EREKREESKG…REKKMGEEHH (76 aa). A compositionally biased stretch (acidic residues) spans 386–396; it reads EGVEVEEEESA.

The protein belongs to the UPF0329 family.

This is UPF0329 protein ECU08_2070 from Encephalitozoon cuniculi (strain GB-M1) (Microsporidian parasite).